An 867-amino-acid chain; its full sequence is Mitochondrial escape protein 2 (867 aa).

2 disordered regions span residues 1 to 20 (MISA…RGPR) and 44 to 66 (RTTR…KESG). The transit peptide at 1 to 41 (MISAHILSRQATRPGHRGPRFTTHSTALLVQRSLGQGLPLA) directs the protein to the mitochondrion. The Mitochondrial matrix portion of the chain corresponds to 42-308 (HRRTTRAWES…IWAWFTSHPR (267 aa)). The span at 48–59 (AWESTSSSTAST) shows a compositional bias: low complexity. The region spanning 203 to 293 (SRIRVEFVAA…TKLRLSYEQR (91 aa)) is the RRM domain. Residues 309–329 (IVIPLVAALIAAFTVAVFDPI) form a helical membrane-spanning segment. Residues 330 to 867 (REFFVKAHVQ…GVVKGQMVKG (538 aa)) lie on the Mitochondrial intermembrane side of the membrane. The span at 614-639 (FAHDGQQKDSESGDQDNDNKNQKKDS) shows a compositional bias: basic and acidic residues. Positions 614–647 (FAHDGQQKDSESGDQDNDNKNQKKDSNTPAPLDP) are disordered. Residues 797–857 (LLVLTELAKM…ARLKGLEKEM (61 aa)) are a coiled coil.

Belongs to the YME2 family.

The protein localises to the mitochondrion inner membrane. Its function is as follows. Plays a role in maintaining the mitochondrial genome and in controlling the mtDNA escape. Involved in the regulation of mtDNA nucleotide structure and number. May have a dispensable role in early maturation of pre-rRNA. This chain is Mitochondrial escape protein 2 (msp-45), found in Neurospora crassa (strain ATCC 24698 / 74-OR23-1A / CBS 708.71 / DSM 1257 / FGSC 987).